A 467-amino-acid polypeptide reads, in one-letter code: DNA repair protein RadA (467 aa).

The C4-type zinc finger occupies 10-27 (CQNCGAVHSRWAGKCDSC). 98 to 105 (GDPGIGKS) is a binding site for ATP. The short motif at 260–264 (KNRFG) is the RadA KNRFG motif element. Residues 359-467 (DVYLNVAGGY…RIAASGAGKK (109 aa)) form a lon-protease-like region.

This sequence belongs to the RecA family. RadA subfamily.

Functionally, DNA-dependent ATPase involved in processing of recombination intermediates, plays a role in repairing DNA breaks. Stimulates the branch migration of RecA-mediated strand transfer reactions, allowing the 3' invading strand to extend heteroduplex DNA faster. Binds ssDNA in the presence of ADP but not other nucleotides, has ATPase activity that is stimulated by ssDNA and various branched DNA structures, but inhibited by SSB. Does not have RecA's homology-searching function. This is DNA repair protein RadA from Brucella abortus (strain 2308).